The sequence spans 885 residues: Alanine--tRNA ligase (885 aa).

Positions 564, 568, 676, and 680 each coordinate Zn(2+).

It belongs to the class-II aminoacyl-tRNA synthetase family. Zn(2+) is required as a cofactor.

The protein resides in the cytoplasm. It carries out the reaction tRNA(Ala) + L-alanine + ATP = L-alanyl-tRNA(Ala) + AMP + diphosphate. Its function is as follows. Catalyzes the attachment of alanine to tRNA(Ala) in a two-step reaction: alanine is first activated by ATP to form Ala-AMP and then transferred to the acceptor end of tRNA(Ala). Also edits incorrectly charged Ser-tRNA(Ala) and Gly-tRNA(Ala) via its editing domain. This is Alanine--tRNA ligase from Brucella anthropi (strain ATCC 49188 / DSM 6882 / CCUG 24695 / JCM 21032 / LMG 3331 / NBRC 15819 / NCTC 12168 / Alc 37) (Ochrobactrum anthropi).